The chain runs to 453 residues: Chromosomal replication initiator protein DnaA (453 aa).

Residues 1–74 (MKEKQFWNRI…GFEIYDAEIT (74 aa)) form a domain I, interacts with DnaA modulators region. The domain II stretch occupies residues 74–113 (TPHYIFTKPQDTTSSQVEEATNLTLYDYSPKLVSIPYSDT). A domain III, AAA+ region region spans residues 114 to 331 (GLKEKYTFDN…GAINDITLIA (218 aa)). G158, G160, K161, and T162 together coordinate ATP. The tract at residues 332–453 (RVKKIKDITI…EIESIKKKIK (122 aa)) is domain IV, binds dsDNA.

It belongs to the DnaA family. Oligomerizes as a right-handed, spiral filament on DNA at oriC.

The protein resides in the cytoplasm. In terms of biological role, plays an essential role in the initiation and regulation of chromosomal replication. ATP-DnaA binds to the origin of replication (oriC) to initiate formation of the DNA replication initiation complex once per cell cycle. Binds the DnaA box (a 9 base pair repeat at the origin) and separates the double-stranded (ds)DNA. Forms a right-handed helical filament on oriC DNA; dsDNA binds to the exterior of the filament while single-stranded (ss)DNA is stabiized in the filament's interior. The ATP-DnaA-oriC complex binds and stabilizes one strand of the AT-rich DNA unwinding element (DUE), permitting loading of DNA polymerase. After initiation quickly degrades to an ADP-DnaA complex that is not apt for DNA replication. Binds acidic phospholipids. This is Chromosomal replication initiator protein DnaA from Streptococcus pneumoniae (strain Taiwan19F-14).